A 61-amino-acid polypeptide reads, in one-letter code: Photosystem II reaction center protein K (61 aa).

The propeptide occupies 1-24 (MLNIFCLICICLNSTLYSSSFFFA). The helical transmembrane segment at 32–52 (FFNPIIDVMPIIPVLFFLLAF) threads the bilayer.

It belongs to the PsbK family. In terms of assembly, PSII is composed of 1 copy each of membrane proteins PsbA, PsbB, PsbC, PsbD, PsbE, PsbF, PsbH, PsbI, PsbJ, PsbK, PsbL, PsbM, PsbT, PsbX, PsbY, PsbZ, Psb30/Ycf12, at least 3 peripheral proteins of the oxygen-evolving complex and a large number of cofactors. It forms dimeric complexes.

The protein localises to the plastid. It localises to the chloroplast thylakoid membrane. One of the components of the core complex of photosystem II (PSII). PSII is a light-driven water:plastoquinone oxidoreductase that uses light energy to abstract electrons from H(2)O, generating O(2) and a proton gradient subsequently used for ATP formation. It consists of a core antenna complex that captures photons, and an electron transfer chain that converts photonic excitation into a charge separation. The polypeptide is Photosystem II reaction center protein K (Phalaenopsis aphrodite subsp. formosana (Moth orchid)).